Consider the following 552-residue polypeptide: Berberine bridge enzyme-like 6 (552 aa).

The N-terminal stretch at 1–16 (MKEAFVFLLCLTNKFP) is a signal peptide. An intrachain disulfide couples cysteine 56 to cysteine 119. N-linked (GlcNAc...) asparagine glycosylation is found at asparagine 76, asparagine 161, asparagine 280, asparagine 364, asparagine 419, and asparagine 463. The FAD-binding PCMH-type domain occupies 93-270 (FSSPNFKKLL…LSWKINLVEV (178 aa)). A cross-link (6-(S-cysteinyl)-8alpha-(pros-histidyl)-FAD (His-Cys)) is located at residues 134 to 196 (HDNEGFSYMS…QTLAFPAGVC (63 aa)).

It belongs to the oxygen-dependent FAD-linked oxidoreductase family. FAD serves as cofactor. In terms of processing, the FAD cofactor is bound via a bicovalent 6-S-cysteinyl, 8alpha-N1-histidyl FAD linkage.

The protein localises to the secreted. Its subcellular location is the cell wall. Functionally, probable flavin-dependent oxidoreductase. The protein is Berberine bridge enzyme-like 6 of Arabidopsis thaliana (Mouse-ear cress).